The chain runs to 133 residues: Interleukin-4 (133 aa).

Positions 1 to 24 (MGLTSQLIPMLVCLLACTSNFVHG) are cleaved as a signal peptide. 3 cysteine pairs are disulfide-bonded: Cys-27/Cys-133, Cys-48/Cys-85, and Cys-70/Cys-105. Asn-62, Asn-96, and Asn-102 each carry an N-linked (GlcNAc...) asparagine glycan.

It belongs to the IL-4/IL-13 family.

It localises to the secreted. Its function is as follows. Participates in at least several B-cell activation processes as well as of other cell types. It is a costimulator of DNA-synthesis. It induces the expression of class II MHC molecules on resting B-cells. It enhances both secretion and cell surface expression of IgE and IgG1. It also regulates the expression of the low affinity Fc receptor for IgE (CD23) on both lymphocytes and monocytes. Positively regulates IL31RA expression in macrophages. Stimulates autophagy in dendritic cells by interfering with mTORC1 signaling and through the induction of RUFY4. This chain is Interleukin-4 (IL4), found in Tursiops truncatus (Atlantic bottle-nosed dolphin).